The sequence spans 96 residues: Co-chaperonin GroES (96 aa).

Belongs to the GroES chaperonin family. In terms of assembly, heptamer of 7 subunits arranged in a ring. Interacts with the chaperonin GroEL.

It localises to the cytoplasm. In terms of biological role, together with the chaperonin GroEL, plays an essential role in assisting protein folding. The GroEL-GroES system forms a nano-cage that allows encapsulation of the non-native substrate proteins and provides a physical environment optimized to promote and accelerate protein folding. GroES binds to the apical surface of the GroEL ring, thereby capping the opening of the GroEL channel. In Hydrogenobaculum sp. (strain Y04AAS1), this protein is Co-chaperonin GroES.